Consider the following 467-residue polypeptide: tRNA(Ile)-lysidine synthase (467 aa).

Ser35 to Ser40 serves as a coordination point for ATP.

This sequence belongs to the tRNA(Ile)-lysidine synthase family.

The protein localises to the cytoplasm. It catalyses the reaction cytidine(34) in tRNA(Ile2) + L-lysine + ATP = lysidine(34) in tRNA(Ile2) + AMP + diphosphate + H(+). In terms of biological role, ligates lysine onto the cytidine present at position 34 of the AUA codon-specific tRNA(Ile) that contains the anticodon CAU, in an ATP-dependent manner. Cytidine is converted to lysidine, thus changing the amino acid specificity of the tRNA from methionine to isoleucine. The chain is tRNA(Ile)-lysidine synthase from Caldanaerobacter subterraneus subsp. tengcongensis (strain DSM 15242 / JCM 11007 / NBRC 100824 / MB4) (Thermoanaerobacter tengcongensis).